We begin with the raw amino-acid sequence, 314 residues long: 3'-5' exoribonuclease YhaM (314 aa).

Positions 22–90 (SSTKGIASNG…QLKLRNIRPV (69 aa)) form a DNA-binding region, OB. The region spanning 163–279 (HVVSMLNLAK…LHYIDNLDAK (117 aa)) is the HD domain.

This sequence belongs to the YhaM family. The cofactor is Mn(2+). Co(2+) serves as cofactor.

Its function is as follows. Shows a 3'-5' exoribonuclease activity as well as single-stranded DNA 3'-5'exonuclease activity. Plays a role in the secondary pathway of 23S rRNA 3' end maturation. The chain is 3'-5' exoribonuclease YhaM from Bacillus subtilis (strain 168).